A 333-amino-acid chain; its full sequence is Phosphate acyltransferase (333 aa).

It belongs to the PlsX family. In terms of assembly, homodimer. Probably interacts with PlsY.

The protein resides in the cytoplasm. It carries out the reaction a fatty acyl-[ACP] + phosphate = an acyl phosphate + holo-[ACP]. The protein operates within lipid metabolism; phospholipid metabolism. Catalyzes the reversible formation of acyl-phosphate (acyl-PO(4)) from acyl-[acyl-carrier-protein] (acyl-ACP). This enzyme utilizes acyl-ACP as fatty acyl donor, but not acyl-CoA. The polypeptide is Phosphate acyltransferase (Cellvibrio japonicus (strain Ueda107) (Pseudomonas fluorescens subsp. cellulosa)).